A 232-amino-acid polypeptide reads, in one-letter code: Large ribosomal subunit protein uL3 (232 aa).

This sequence belongs to the universal ribosomal protein uL3 family. Part of the 50S ribosomal subunit. Forms a cluster with proteins L14 and L19.

Its function is as follows. One of the primary rRNA binding proteins, it binds directly near the 3'-end of the 23S rRNA, where it nucleates assembly of the 50S subunit. The protein is Large ribosomal subunit protein uL3 of Hydrogenobaculum sp. (strain Y04AAS1).